Here is a 154-residue protein sequence, read N- to C-terminus: UPF0756 membrane protein CKR_1028 (154 aa).

The next 4 helical transmembrane spans lie at 5 to 25 (IILI…VALA), 48 to 68 (NGLF…IADG), 82 to 102 (WLGI…GLGM), and 113 to 133 (IMPA…GVPV).

This sequence belongs to the UPF0756 family.

The protein resides in the cell membrane. This Clostridium kluyveri (strain NBRC 12016) protein is UPF0756 membrane protein CKR_1028.